Here is a 144-residue protein sequence, read N- to C-terminus: EF-hand calcium-binding domain-containing protein 8 (144 aa).

2 EF-hand domains span residues 52-86 (IHLA…VLSS) and 87-122 (VSDE…EFQG).

The polypeptide is EF-hand calcium-binding domain-containing protein 8 (EFCAB8) (Homo sapiens (Human)).